The primary structure comprises 593 residues: Brain-enriched guanylate kinase-associated protein (593 aa).

Residue Met1 is modified to N-acetylmethionine. At Tyr137 the chain carries Phosphotyrosine. Phosphoserine is present on residues Ser200, Ser229, Ser246, Ser265, Ser346, and Ser373. At Arg381 the chain carries Asymmetric dimethylarginine. A phosphoserine mark is found at Ser455, Ser465, Ser475, Ser477, Ser500, Ser502, Ser506, Ser553, and Ser563. The interval 499–593 (LSLSPGRSAD…KAQLYGTLLN (95 aa)) is disordered.

Interacts with DLG4 and DLGAP1 and forms a ternary complex.

The protein localises to the cytoplasm. Its subcellular location is the membrane. In terms of biological role, may sustain the structure of the postsynaptic density (PSD). This Homo sapiens (Human) protein is Brain-enriched guanylate kinase-associated protein (BEGAIN).